Consider the following 478-residue polypeptide: PRAME family member 15 (478 aa).

One copy of the LRR 1; degenerate repeat lies at 99–126 (RWKLQVLDLQDVCENFWMVWSEAMAHGC). The stretch at 181–205 (HLCCKKLKILGMPFRNIRSILKMVN) is one LRR 2; degenerate repeat. Residues 206–232 (LDCIQEVEVNCKWVLPILTQFTPYLGH) form an LRR 3; degenerate repeat. An LRR 4; degenerate repeat occupies 233–268 (MRNLQKLVLSHMDVSRYVSPEQKKEIVTQFTTQFLK). 5 LRR repeats span residues 269–294 (LRCL…LSCL), 295–326 (KTSL…SQLK), 327–347 (TLDL…QILL), 351–378 (AATL…ALSR), and 379–403 (CFEL…LLSH).

This sequence belongs to the PRAME family.

This chain is PRAME family member 15, found in Homo sapiens (Human).